The primary structure comprises 214 residues: Large ribosomal subunit protein uL18 (214 aa).

This sequence belongs to the universal ribosomal protein uL18 family. As to quaternary structure, part of the 50S ribosomal subunit. Contacts the 5S and 23S rRNAs.

Its function is as follows. This is one of the proteins that bind and probably mediate the attachment of the 5S RNA into the large ribosomal subunit, where it forms part of the central protuberance. In Aeropyrum pernix (strain ATCC 700893 / DSM 11879 / JCM 9820 / NBRC 100138 / K1), this protein is Large ribosomal subunit protein uL18.